We begin with the raw amino-acid sequence, 417 residues long: Laccase-like protein claX (417 aa).

It belongs to the multicopper oxidase family.

In terms of biological role, laccase-like protein; part of the gene cluster that mediates the biosynthesis of clavilactone A, a meroterpenoid that features a unique benzo-fused ten-membered carbocyclic ring unit with an alpha,beta-epoxy-gamma-lactone moiety, forming an intriguing 10/5/3 tricyclic nested skeleton. ClaR, ClaS and ClaT are sufficient to produce clavilactone A and the function of claX, if any, has still to be identified. The biosynthesis begins with the prenyltransferase claS that transfers geranyl pyrophosphate (GPP) to hydroquinone to produces geranylhydroquinon. The cytochrome P450 monooxygenase claR then catalyzes the diradical coupling reaction between the intramolecular hydroquinone and allyl moieties to form the benzo-fused ten-membered carbocyclic ring unit of wigantol. Finally the cytochrome P450 monooxygenase claT exquisitely and stereoselectively assembles the alpha,beta-epoxy-gamma-lactone moiety, producing clavilactone A via arnebinol A. The polypeptide is Laccase-like protein claX (Ampulloclitocybe clavipes (Club foot)).